The sequence spans 101 residues: MAKVSMKNREQKREKLVAKYAAKRAELKAIIKNPNTSDDDRWDAQMKLQQLPRDSSPSRLRNRCQVTGRPHGVLRKFELSRIKLREYGMRGDVPGLTKASW.

It belongs to the universal ribosomal protein uS14 family. Part of the 30S ribosomal subunit. Contacts proteins S3 and S10.

Binds 16S rRNA, required for the assembly of 30S particles and may also be responsible for determining the conformation of the 16S rRNA at the A site. In Marinobacter nauticus (strain ATCC 700491 / DSM 11845 / VT8) (Marinobacter aquaeolei), this protein is Small ribosomal subunit protein uS14.